We begin with the raw amino-acid sequence, 67 residues long: Ubiquinol-cytochrome c reductase complex assembly factor 6 (67 aa).

Residues 1 to 8 are Mitochondrial matrix-facing; that stretch reads MPGGVPWS. A helical; Signal-anchor for type II membrane protein membrane pass occupies residues 9–25; it reads AYLKMLSSSLLAMCAGA. Topologically, residues 26–67 are mitochondrial intermembrane; sequence QVVHWYYRPDLTIPEIPPKPGELKTELLGLKERRHEPHVSQQ.

The protein belongs to the UQCC6 family. Interacts with UQCRC1. Interacts with UQCRQ. Interacts with UQCC5. Forms a complex, named COMB/coordinator of mitochondrial CYTB biogenesis, composed of UQCC1, UQCC2, UQCC4, UQCC5 and UQCC6; stabilizes nascent cytochrome b/MT-CYB and promotes its membrane insertion. Forms a complex, named COMA, composed of UQCC1, UQCC2 and UQCC4; activates MT-CYB translation. Forms a complex, named COMC, composed of UQCC1, UQCC2; UQCC3 and UQCC4; mediates MT-CYB hemylation and association with the first nuclear-encoded complex III subunit UQCRQ. Interacts with MT-CYB. As to expression, highly expressed in brown adipose, cardiac and skeletal muscle (at protein level).

Its subcellular location is the mitochondrion inner membrane. Required for the assembly and stability of the mitochondrial ubiquinol-cytochrome c reductase complex (complex III or cytochrome b-c1 complex), a multisubunit transmembrane complex that is part of the mitochondrial electron transport chain (ETC) which drives oxidative phosphorylation. Mediates early complex III biogenesis. Participates in regulating the levels of electron transport chain proteins, and therefore energy supply, in response to changes in energy demand. Also required for cytochrome c oxidase complex (complex IV) assembly. In Mus musculus (Mouse), this protein is Ubiquinol-cytochrome c reductase complex assembly factor 6.